A 103-amino-acid chain; its full sequence is Cyclotide vibi-K (103 aa).

Residues 1–9 (AAFALPAFA) form the signal peptide. A propeptide spanning residues 10 to 69 (SFEKDVITPSVLEAVLNRKAPLSNIMMENDAILNVIANVKTVISNPVLEEALLKTNHGVN) is cleaved from the precursor. A cross-link (cyclopeptide (Gly-Asn)) is located at residues 70–99 (GIPCGESCVWIPCLTSAVGCPCKSKVCYRN). Disulfide bonds link Cys73–Cys89, Cys77–Cys91, and Cys82–Cys96. Residues 100–103 (SLDN) constitute a propeptide that is removed on maturation.

This is a cyclic peptide.

Its function is as follows. Probably participates in a plant defense mechanism. The protein is Cyclotide vibi-K of Viola biflora (Yellow wood violet).